A 736-amino-acid polypeptide reads, in one-letter code: Polyphosphate kinase (736 aa).

Asparagine 91 contacts ATP. The Mg(2+) site is built by arginine 421 and arginine 451. The active-site Phosphohistidine intermediate is histidine 481. ATP-binding residues include tyrosine 514, arginine 610, and histidine 638.

It belongs to the polyphosphate kinase 1 (PPK1) family. Mg(2+) serves as cofactor. In terms of processing, an intermediate of this reaction is the autophosphorylated ppk in which a phosphate is covalently linked to a histidine residue through a N-P bond.

It carries out the reaction [phosphate](n) + ATP = [phosphate](n+1) + ADP. Functionally, catalyzes the reversible transfer of the terminal phosphate of ATP to form a long-chain polyphosphate (polyP). The protein is Polyphosphate kinase of Pseudomonas syringae pv. tomato (strain ATCC BAA-871 / DC3000).